A 383-amino-acid polypeptide reads, in one-letter code: Lipid-A-disaccharide synthase (383 aa).

This sequence belongs to the LpxB family.

It catalyses the reaction 2-N,3-O-bis[(3R)-3-hydroxytetradecanoyl]-alpha-D-glucosaminyl 1-phosphate + UDP-2-N,3-O-bis[(3R)-3-hydroxytetradecanoyl]-alpha-D-glucosamine = lipid A disaccharide (E. coli) + UDP + H(+). The catalysed reaction is a lipid X + a UDP-2-N,3-O-bis[(3R)-3-hydroxyacyl]-alpha-D-glucosamine = a lipid A disaccharide + UDP + H(+). It functions in the pathway glycolipid biosynthesis; lipid IV(A) biosynthesis; lipid IV(A) from (3R)-3-hydroxytetradecanoyl-[acyl-carrier-protein] and UDP-N-acetyl-alpha-D-glucosamine: step 5/6. Functionally, condensation of UDP-2,3-diacylglucosamine and 2,3-diacylglucosamine-1-phosphate to form lipid A disaccharide, a precursor of lipid A, a phosphorylated glycolipid that anchors the lipopolysaccharide to the outer membrane of the cell. This Klebsiella pneumoniae (strain 342) protein is Lipid-A-disaccharide synthase.